The sequence spans 481 residues: Argininosuccinate lyase (481 aa).

This sequence belongs to the lyase 1 family. Argininosuccinate lyase subfamily.

The protein localises to the cytoplasm. It catalyses the reaction 2-(N(omega)-L-arginino)succinate = fumarate + L-arginine. The protein operates within amino-acid biosynthesis; L-arginine biosynthesis; L-arginine from L-ornithine and carbamoyl phosphate: step 3/3. In Methanococcus maripaludis (strain C7 / ATCC BAA-1331), this protein is Argininosuccinate lyase.